A 208-amino-acid polypeptide reads, in one-letter code: Uracil phosphoribosyltransferase (208 aa).

Residues arginine 78, arginine 103, and 130–138 (DPMLATGGS) each bind 5-phospho-alpha-D-ribose 1-diphosphate. Uracil is bound by residues isoleucine 193 and 198-200 (GDA). Aspartate 199 contributes to the 5-phospho-alpha-D-ribose 1-diphosphate binding site.

It belongs to the UPRTase family. Requires Mg(2+) as cofactor.

The catalysed reaction is UMP + diphosphate = 5-phospho-alpha-D-ribose 1-diphosphate + uracil. It participates in pyrimidine metabolism; UMP biosynthesis via salvage pathway; UMP from uracil: step 1/1. Allosterically activated by GTP. Catalyzes the conversion of uracil and 5-phospho-alpha-D-ribose 1-diphosphate (PRPP) to UMP and diphosphate. The polypeptide is Uracil phosphoribosyltransferase (Escherichia fergusonii (strain ATCC 35469 / DSM 13698 / CCUG 18766 / IAM 14443 / JCM 21226 / LMG 7866 / NBRC 102419 / NCTC 12128 / CDC 0568-73)).